The primary structure comprises 550 residues: Glucose-6-phosphate isomerase (550 aa).

E356 serves as the catalytic Proton donor. Catalysis depends on residues H387 and K515.

Belongs to the GPI family.

The protein localises to the cytoplasm. It catalyses the reaction alpha-D-glucose 6-phosphate = beta-D-fructose 6-phosphate. The protein operates within carbohydrate biosynthesis; gluconeogenesis. It functions in the pathway carbohydrate degradation; glycolysis; D-glyceraldehyde 3-phosphate and glycerone phosphate from D-glucose: step 2/4. Its function is as follows. Catalyzes the reversible isomerization of glucose-6-phosphate to fructose-6-phosphate. This Vibrio cholerae serotype O1 (strain ATCC 39315 / El Tor Inaba N16961) protein is Glucose-6-phosphate isomerase.